A 485-amino-acid polypeptide reads, in one-letter code: N-succinylglutamate 5-semialdehyde dehydrogenase (485 aa).

220-225 contributes to the NAD(+) binding site; the sequence is GSANTG. Catalysis depends on residues Glu-243 and Cys-278.

It belongs to the aldehyde dehydrogenase family. AstD subfamily.

The enzyme catalyses N-succinyl-L-glutamate 5-semialdehyde + NAD(+) + H2O = N-succinyl-L-glutamate + NADH + 2 H(+). It participates in amino-acid degradation; L-arginine degradation via AST pathway; L-glutamate and succinate from L-arginine: step 4/5. Its function is as follows. Catalyzes the NAD-dependent reduction of succinylglutamate semialdehyde into succinylglutamate. The sequence is that of N-succinylglutamate 5-semialdehyde dehydrogenase from Vibrio vulnificus (strain YJ016).